Here is an 871-residue protein sequence, read N- to C-terminus: Dual O-methyltransferase/FAD-dependent monooxygenase CTB3 (871 aa).

Residues 1–429 (MMQFQRDLEA…GLLTVRSAGQ (429 aa)) are O-methyltransferase. Position 279 (aspartate 279) interacts with S-adenosyl-L-methionine. Histidine 331 functions as the Proton acceptor in the catalytic mechanism. The interval 430 to 871 (TALSGTNTLT…NLVDCSEFVF (442 aa)) is FAD-dependent monooxygenase. Positions 485, 569, 793, and 806 each coordinate FAD.

This sequence in the C-terminal section; belongs to the paxM FAD-dependent monooxygenase family. In the N-terminal section; belongs to the class I-like SAM-binding methyltransferase superfamily. Cation-independent O-methyltransferase family. COMT subfamily.

It carries out the reaction nor-toralactone + S-adenosyl-L-methionine = toralactone + S-adenosyl-L-homocysteine + H(+). The catalysed reaction is toralactone + NADH + O2 + H(+) = 1-(3,4,5-trihydroxy-7-methoxynaphthalen-2-yl)propan-2-one + CO2 + NAD(+). It participates in mycotoxin biosynthesis. Dual O-methyltransferase/FAD-dependent monooxygenase; part of the gene cluster that mediates the biosynthesis of cercosporin, a light-activated, non-host-selective toxin. The perylenequinone chromophore of cercosporin absorbs light energy to attain an electronically-activated triplet state and produces active oxygen species such as the hydroxyl radical, superoxide, hydrogen peroxide or singlet oxygen upon reaction with oxygen molecules. These reactive oxygen species cause damage to various cellular components including lipids, proteins and nucleic acids. The first step of cercosporin biosynthesis is performed by the polyketide synthase CTB1 which catalyzes the formation of nor-toralactone. The starter unit acyltransferase (SAT) domain of CTB1 initiates polyketide extension by the selective utilization of acetyl-CoA, which is elongated to the heptaketide in the beta-ketoacyl synthase (KS) domain by successive condensations with six malonyl units introduced by the malonyl acyltransferase (MAT) domain. The product template (PT) domain catalyzes C4-C9 and C2-C11 aldol cyclizations and dehydrations to a trihydroxynaphthalene, which is thought to be delivered to the thioesterase (TE) domain for product release. The bifunctional enzyme CTB3 then methylates nor-toralactone to toralactone before conducting an unusual oxidative aromatic ring opening. The O-methyltransferase CTB2 further methylates the nascent OH-6 of the CBT3 product, blocking further oxidation at this site before the reductase CTB6 reduces the 2-oxopropyl ketone at position C7, giving naphthalene. The FAD-dependent monooxygenase CTB5 in concert with the multicopper oxidase CTB12 are responsible for homodimerization of naphthalene with CTB7 installing the dioxepine moiety, finally producing cercosporin. The fasciclin domain-containing protein CTB11 might act with CTB5 and CTB12 whereas the roles of CTB9 and CTB10 have still to be elucidated. This chain is Dual O-methyltransferase/FAD-dependent monooxygenase CTB3, found in Cercospora beticola (Sugarbeet leaf spot fungus).